Reading from the N-terminus, the 248-residue chain is 1-(5-phosphoribosyl)-5-[(5-phosphoribosylamino)methylideneamino] imidazole-4-carboxamide isomerase (248 aa).

The Proton acceptor role is filled by Asp-7. Catalysis depends on Asp-129, which acts as the Proton donor.

The protein belongs to the HisA/HisF family.

The protein resides in the cytoplasm. The enzyme catalyses 1-(5-phospho-beta-D-ribosyl)-5-[(5-phospho-beta-D-ribosylamino)methylideneamino]imidazole-4-carboxamide = 5-[(5-phospho-1-deoxy-D-ribulos-1-ylimino)methylamino]-1-(5-phospho-beta-D-ribosyl)imidazole-4-carboxamide. Its pathway is amino-acid biosynthesis; L-histidine biosynthesis; L-histidine from 5-phospho-alpha-D-ribose 1-diphosphate: step 4/9. This chain is 1-(5-phosphoribosyl)-5-[(5-phosphoribosylamino)methylideneamino] imidazole-4-carboxamide isomerase, found in Aeromonas salmonicida (strain A449).